We begin with the raw amino-acid sequence, 68 residues long: Small proline-rich protein 2K (68 aa).

A 1; truncated repeat occupies 21–26 (PKPCSP). The segment at 21-65 (PKPCSPPKCPEPCPPPKCPETCPPQPCQRKCPPVLEAPCQQKCPS) is 3.5 X 9 AA approximate tandem repeats. Repeat copies occupy residues 27 to 35 (PKCPEPCPP), 36 to 44 (PKCPETCPP), and 45 to 53 (QPCQRKCPP).

This sequence belongs to the cornifin (SPRR) family. In terms of tissue distribution, not expressed in uterus.

The protein resides in the cytoplasm. Its function is as follows. Cross-linked envelope protein of keratinocytes. It is a keratinocyte protein that first appears in the cell cytosol, but ultimately becomes cross-linked to membrane proteins by transglutaminase. All that results in the formation of an insoluble envelope beneath the plasma membrane. This Mus musculus (Mouse) protein is Small proline-rich protein 2K (Sprr2k).